Reading from the N-terminus, the 353-residue chain is JmjC domain-containing protein E (353 aa).

A JmjC domain is found at 138–348; the sequence is YYIQYQNNSL…ETTKYQKQIK (211 aa).

In Dictyostelium discoideum (Social amoeba), this protein is JmjC domain-containing protein E (jcdE).